The sequence spans 135 residues: C-type lectin BpLec (135 aa).

Cystine bridges form between C3/C14, C31/C131, C38/C133, and C106/C123. Positions 10-132 (MNGLCYKIFD…CESKNAFLCQ (123 aa)) constitute a C-type lectin domain. Ca(2+)-binding residues include Q96, D98, E104, N119, and D120. Residues 96-98 (QPD) carry the Galactose-binding motif.

It belongs to the true venom lectin family. As to quaternary structure, homodimer; disulfide-linked. In terms of tissue distribution, expressed by the venom gland.

Its subcellular location is the secreted. In terms of biological role, this lectin displays hemagglutinating activity on dog (128'000 HU/mg) and cat erythrocytes, that is inhibited by beta-galactosides (D-galactose, D-lactose, and N-acetyl-D-galactosamine) and EDTA. In addition, has been shown to hemagglutinate promastigote forms of Leishmania amazonensis. Also inhibits Gram-positive (S.aureus ATCC 25923) (MIC is 31.25 ug/ml) but not Gram-negative (E.coli ATCC 25922) bacteria. Is a calcium-dependent lectin. This Bothrops pauloensis (Neuwied's lancehead) protein is C-type lectin BpLec.